Reading from the N-terminus, the 172-residue chain is ATP synthase subunit b (172 aa).

Residues 18–38 traverse the membrane as a helical segment; sequence IVWSLIILVIVAVFFYKFFMP.

This sequence belongs to the ATPase B chain family. As to quaternary structure, F-type ATPases have 2 components, F(1) - the catalytic core - and F(0) - the membrane proton channel. F(1) has five subunits: alpha(3), beta(3), gamma(1), delta(1), epsilon(1). F(0) has three main subunits: a(1), b(2) and c(10-14). The alpha and beta chains form an alternating ring which encloses part of the gamma chain. F(1) is attached to F(0) by a central stalk formed by the gamma and epsilon chains, while a peripheral stalk is formed by the delta and b chains.

Its subcellular location is the cell membrane. F(1)F(0) ATP synthase produces ATP from ADP in the presence of a proton or sodium gradient. F-type ATPases consist of two structural domains, F(1) containing the extramembraneous catalytic core and F(0) containing the membrane proton channel, linked together by a central stalk and a peripheral stalk. During catalysis, ATP synthesis in the catalytic domain of F(1) is coupled via a rotary mechanism of the central stalk subunits to proton translocation. Its function is as follows. Component of the F(0) channel, it forms part of the peripheral stalk, linking F(1) to F(0). In Bifidobacterium longum (strain DJO10A), this protein is ATP synthase subunit b.